The chain runs to 411 residues: Tyrosine--tRNA ligase (411 aa).

Tyr-33 provides a ligand contact to L-tyrosine. The 'HIGH' region motif lies at 38–47 (PTADSLHLGN). Tyr-160 and Gln-164 together coordinate L-tyrosine. A 'KMSKS' region motif is present at residues 222–226 (KFGKS). Residue Lys-225 coordinates ATP. Positions 346-410 (VNLVNFLVEN…GKKKILICKV (65 aa)) constitute an S4 RNA-binding domain.

The protein belongs to the class-I aminoacyl-tRNA synthetase family. TyrS type 1 subfamily. Homodimer.

It is found in the cytoplasm. The enzyme catalyses tRNA(Tyr) + L-tyrosine + ATP = L-tyrosyl-tRNA(Tyr) + AMP + diphosphate + H(+). Catalyzes the attachment of tyrosine to tRNA(Tyr) in a two-step reaction: tyrosine is first activated by ATP to form Tyr-AMP and then transferred to the acceptor end of tRNA(Tyr). This Mycoplasmopsis synoviae (strain 53) (Mycoplasma synoviae) protein is Tyrosine--tRNA ligase.